Reading from the N-terminus, the 302-residue chain is Acidic endochitinase (302 aa).

An N-terminal signal peptide occupies residues M1–G30. The GH18 domain maps to G31–V302. Cystine bridges form between C49–C96 and C79–C86. E156 serves as the catalytic Proton donor. C188 and C217 are disulfide-bonded.

This sequence belongs to the glycosyl hydrolase 18 family. Chitinase class III subfamily.

It is found in the secreted. The protein localises to the extracellular space. The catalysed reaction is Random endo-hydrolysis of N-acetyl-beta-D-glucosaminide (1-&gt;4)-beta-linkages in chitin and chitodextrins.. In terms of biological role, this protein functions as a defense against chitin containing fungal pathogens. The sequence is that of Acidic endochitinase (CHIB1) from Arabidopsis thaliana (Mouse-ear cress).